We begin with the raw amino-acid sequence, 367 residues long: Histidinol-phosphate aminotransferase 1 (367 aa).

Residue Lys-229 is modified to N6-(pyridoxal phosphate)lysine.

The protein belongs to the class-II pyridoxal-phosphate-dependent aminotransferase family. Histidinol-phosphate aminotransferase subfamily. Homodimer. The cofactor is pyridoxal 5'-phosphate.

The enzyme catalyses L-histidinol phosphate + 2-oxoglutarate = 3-(imidazol-4-yl)-2-oxopropyl phosphate + L-glutamate. It participates in amino-acid biosynthesis; L-histidine biosynthesis; L-histidine from 5-phospho-alpha-D-ribose 1-diphosphate: step 7/9. The protein is Histidinol-phosphate aminotransferase 1 (hisC1) of Mesorhizobium japonicum (strain LMG 29417 / CECT 9101 / MAFF 303099) (Mesorhizobium loti (strain MAFF 303099)).